A 233-amino-acid polypeptide reads, in one-letter code: Small ribosomal subunit protein uS3 (233 aa).

The KH type-2 domain occupies 39–107 (IRAFLKRKLY…DVNINIKEER (69 aa)). Residues 212-222 (MQPEKTEESAP) are compositionally biased toward basic and acidic residues. The disordered stretch occupies residues 212–233 (MQPEKTEESAPAKKSRRTRRGK). Residues 224–233 (KKSRRTRRGK) show a composition bias toward basic residues.

It belongs to the universal ribosomal protein uS3 family. As to quaternary structure, part of the 30S ribosomal subunit. Forms a tight complex with proteins S10 and S14.

Binds the lower part of the 30S subunit head. Binds mRNA in the 70S ribosome, positioning it for translation. This chain is Small ribosomal subunit protein uS3, found in Campylobacter jejuni subsp. doylei (strain ATCC BAA-1458 / RM4099 / 269.97).